We begin with the raw amino-acid sequence, 130 residues long: Small ribosomal subunit protein uS8 (130 aa).

It belongs to the universal ribosomal protein uS8 family. In terms of assembly, part of the 30S ribosomal subunit. Contacts proteins S5 and S12.

Its function is as follows. One of the primary rRNA binding proteins, it binds directly to 16S rRNA central domain where it helps coordinate assembly of the platform of the 30S subunit. This chain is Small ribosomal subunit protein uS8, found in Marinobacter nauticus (strain ATCC 700491 / DSM 11845 / VT8) (Marinobacter aquaeolei).